Consider the following 319-residue polypeptide: Red chlorophyll catabolite reductase, chloroplastic (319 aa).

A chloroplast-targeting transit peptide spans 1 to 39 (MAMIFCNTLYSSSSPSYLSPLTSKPSRFSKNLRPRAQFQ). Residues glutamate 154 and 207–209 (YVS) contribute to the red chlorophyll catabolite site. Residues 255 to 286 (LERCVKEEEEKIVVGEEERMELERRDKSFRRK) adopt a coiled-coil conformation. Residue aspartate 291 coordinates red chlorophyll catabolite.

In terms of assembly, homodimer. Interacts with HCAR. Interacts with SGR1, NYC1, NOL, PPH, PAO and the LHCII complex. Part of a SGR1-CCE-LHCII complex, which acts in chlorophyll breakdown. As to expression, expressed in all tissues tested, including roots.

The protein resides in the plastid. It localises to the chloroplast stroma. It is found in the chloroplast thylakoid membrane. The catalysed reaction is primary fluorescent chlorophyll catabolite + 2 oxidized [2Fe-2S]-[ferredoxin] = red chlorophyll catabolite + 2 reduced [2Fe-2S]-[ferredoxin] + 3 H(+). Its pathway is porphyrin-containing compound metabolism; chlorophyll degradation. Functionally, catalyzes the key reaction of chlorophyll catabolism, porphyrin macrocycle cleavage of pheophorbide a (pheide a) to a primary fluorescent catabolite (pFCC). Works in a two-step reaction with pheophorbide a oxygenase (PaO) by reducing the C20/C1 double bond of the intermediate, RCC. Belongs to the chlorophyll catabolic enzymes (CCEs). The protein is Red chlorophyll catabolite reductase, chloroplastic of Arabidopsis thaliana (Mouse-ear cress).